Reading from the N-terminus, the 667-residue chain is Acetoacetyl-CoA synthetase (667 aa).

It belongs to the ATP-dependent AMP-binding enzyme family.

The protein localises to the cytoplasm. Its subcellular location is the cytosol. The enzyme catalyses acetoacetate + ATP + CoA = acetoacetyl-CoA + AMP + diphosphate. In terms of biological role, converts acetoacetate to acetoacetyl-CoA in the cytosol. Ketone body-utilizing enzyme, responsible for the synthesis of cholesterol and fatty acids. This is Acetoacetyl-CoA synthetase (AACS) from Gallus gallus (Chicken).